Here is a 366-residue protein sequence, read N- to C-terminus: Zinc finger CCCH domain-containing protein 11 (366 aa).

The tract at residues 43–66 (LHQAVQPKPDPTKTAAKKKKEEEK) is disordered. Positions 54 to 79 (TKTAAKKKKEEEKAREKELNDLFKVA) form a coiled coil. 2 C3H1-type zinc fingers span residues 90–117 (DPKSIVCEFFKVGQCQKGFKCKFSHDLN) and 160–198 (KPTDIVCKYFLDAVEKKQYGWFWVCPNGGKDCHYRHALP). Residues 208 to 234 (KALLEEESEKIAIEDEIEDQRKKVKTT) adopt a coiled-coil conformation. The interval 293-338 (YERQEESEANEEPSNKNQDEGPSSSTSNGKEVEESDDEDINIDDDL) is disordered. A compositionally biased stretch (polar residues) spans 312-321 (EGPSSSTSNG). Residues 325 to 338 (EESDDEDINIDDDL) are compositionally biased toward acidic residues.

The chain is Zinc finger CCCH domain-containing protein 11 from Oryza sativa subsp. japonica (Rice).